The following is a 154-amino-acid chain: Protein LOL1 (154 aa).

Putative zinc finger regions lie at residues 34–64 (QLVCSGCRNLLMYPVGATSVCCAVCNAVTAV), 73–103 (QLVCGGCHTLLMYIRGATSVQCSCCHTVNLA), and 111–141 (HVNCGNCMMLLMYQYGARSVKCAVCNFVTSV).

It localises to the nucleus. In terms of biological role, positive regulator of reactive oxygen-induced cell death. May be involved in the repression of the copper/zinc superoxide dismutase CSD1 and CSD2 that detoxify accumulating superoxide before the reactive oxygen species (ROS) can trigger a cell death cascade. LSD1 and LOL1 have antagonistic effects on CSD1 and CSD2 accumulation to regulate oxidative stress-induced cell death. The chain is Protein LOL1 (LOL1) from Arabidopsis thaliana (Mouse-ear cress).